Consider the following 66-residue polypeptide: Large ribosomal subunit protein bL32 (66 aa).

This sequence belongs to the bacterial ribosomal protein bL32 family.

The protein is Large ribosomal subunit protein bL32 of Rickettsia akari (strain Hartford).